A 193-amino-acid polypeptide reads, in one-letter code: dCTP deaminase (193 aa).

Residues 110-115 (RSSLAR), D128, 136-138 (VLE), Y171, K178, and Q182 each bind dCTP. Residue E138 is the Proton donor/acceptor of the active site.

This sequence belongs to the dCTP deaminase family. In terms of assembly, homotrimer.

The catalysed reaction is dCTP + H2O + H(+) = dUTP + NH4(+). It participates in pyrimidine metabolism; dUMP biosynthesis; dUMP from dCTP (dUTP route): step 1/2. In terms of biological role, catalyzes the deamination of dCTP to dUTP. The chain is dCTP deaminase from Buchnera aphidicola subsp. Acyrthosiphon pisum (strain APS) (Acyrthosiphon pisum symbiotic bacterium).